Reading from the N-terminus, the 262-residue chain is Acyl-[acyl-carrier-protein]--UDP-N-acetylglucosamine O-acyltransferase (262 aa).

It belongs to the transferase hexapeptide repeat family. LpxA subfamily. As to quaternary structure, homotrimer.

It is found in the cytoplasm. It catalyses the reaction a (3R)-hydroxyacyl-[ACP] + UDP-N-acetyl-alpha-D-glucosamine = a UDP-3-O-[(3R)-3-hydroxyacyl]-N-acetyl-alpha-D-glucosamine + holo-[ACP]. The protein operates within glycolipid biosynthesis; lipid IV(A) biosynthesis; lipid IV(A) from (3R)-3-hydroxytetradecanoyl-[acyl-carrier-protein] and UDP-N-acetyl-alpha-D-glucosamine: step 1/6. Functionally, involved in the biosynthesis of lipid A, a phosphorylated glycolipid that anchors the lipopolysaccharide to the outer membrane of the cell. The chain is Acyl-[acyl-carrier-protein]--UDP-N-acetylglucosamine O-acyltransferase from Vibrio atlanticus (strain LGP32) (Vibrio splendidus (strain Mel32)).